The primary structure comprises 266 residues: MNDLYPALLLTLLAGLSTGIGSAMALVVKHTNTRFLTLALGFSAGVMLYVSFVELLPQSEETLLAGMPSQAAAWVATLAFFGGIFFIWAIDQLVPDVENPHEMSYIGRMEERVPDSMRLNRMGLFTAAAIAIHNFPEGMAVFFSALSNQNLGIVIATTIALHNIPEGMAIAVPIYFATKSRKKAFTYSFLSGLAEPLGAIVGFAILKPWLSPPVFGSVLAAVAGIMVYISLDELLPTAEEYGEHHLAISGLIAGMAVMALSLLLLA.

The next 8 membrane-spanning stretches (helical) occupy residues 8-28 (LLLTLLAGLSTGIGSAMALVV), 35-55 (FLTLALGFSAGVMLYVSFVEL), 70-90 (QAAAWVATLAFFGGIFFIWAI), 123-143 (GLFTAAAIAIHNFPEGMAVFF), 152-172 (GIVIATTIALHNIPEGMAIAV), 185-205 (FTYSFLSGLAEPLGAIVGFAI), 209-229 (WLSPPVFGSVLAAVAGIMVYI), and 246-266 (LAISGLIAGMAVMALSLLLLA). Positions 134 and 137 each coordinate Fe(2+). Glu137 and His162 together coordinate Zn(2+). The Fe(2+) site is built by Asn163, Glu166, and Glu195. Glu166 provides a ligand contact to Zn(2+).

This sequence belongs to the ZIP transporter (TC 2.A.5) family. ZupT subfamily.

The protein localises to the cell membrane. It carries out the reaction Zn(2+)(in) = Zn(2+)(out). Mediates zinc uptake. May also transport other divalent cations. In Chlorobium phaeovibrioides (strain DSM 265 / 1930) (Prosthecochloris vibrioformis (strain DSM 265)), this protein is Zinc transporter ZupT.